The chain runs to 267 residues: 4-hydroxy-tetrahydrodipicolinate reductase (267 aa).

11 to 16 (GAAGRM) is an NAD(+) binding site. Arginine 39 contributes to the NADP(+) binding site. NAD(+) is bound by residues 100 to 102 (GTT) and 126 to 129 (APNF). Catalysis depends on histidine 156, which acts as the Proton donor/acceptor. A (S)-2,3,4,5-tetrahydrodipicolinate-binding site is contributed by histidine 157. Lysine 160 functions as the Proton donor in the catalytic mechanism. Residue 166–167 (GT) coordinates (S)-2,3,4,5-tetrahydrodipicolinate.

Belongs to the DapB family.

It localises to the cytoplasm. It carries out the reaction (S)-2,3,4,5-tetrahydrodipicolinate + NAD(+) + H2O = (2S,4S)-4-hydroxy-2,3,4,5-tetrahydrodipicolinate + NADH + H(+). It catalyses the reaction (S)-2,3,4,5-tetrahydrodipicolinate + NADP(+) + H2O = (2S,4S)-4-hydroxy-2,3,4,5-tetrahydrodipicolinate + NADPH + H(+). The protein operates within amino-acid biosynthesis; L-lysine biosynthesis via DAP pathway; (S)-tetrahydrodipicolinate from L-aspartate: step 4/4. In terms of biological role, catalyzes the conversion of 4-hydroxy-tetrahydrodipicolinate (HTPA) to tetrahydrodipicolinate. This is 4-hydroxy-tetrahydrodipicolinate reductase from Moorella thermoacetica (strain ATCC 39073 / JCM 9320).